Reading from the N-terminus, the 537-residue chain is Methylmalonate-semialdehyde/malonate-semialdehyde dehydrogenase [acylating], mitochondrial (537 aa).

The N-terminal 34 residues, 1-34, are a transit peptide targeting the mitochondrion; that stretch reads MAAVAVAAAAAALRARILQVSSKVNSSWQPASSF. N6-acetyllysine; alternate occurs at positions 49, 54, 57, and 78. An N6-succinyllysine; alternate mark is found at K49, K54, K57, and K78. K89 bears the N6-acetyllysine mark. An N6-acetyllysine; alternate mark is found at K119 and K131. N6-succinyllysine; alternate occurs at positions 119 and 131. 6 residues coordinate NAD(+): A185, F187, K211, E214, R215, and S264. At S264 the chain carries Phosphoserine. Residue K300 is modified to N6-acetyllysine. The active-site Nucleophile is C319. 2 positions are modified to N6-acetyllysine: K332 and K333. Residues K366 and K378 each carry the N6-acetyllysine; alternate modification. N6-succinyllysine; alternate occurs at positions 366 and 378. A Phosphoserine modification is found at S382. Position 393 is an N6-succinyllysine (K393). E419 lines the NAD(+) pocket. N6-acetyllysine is present on K502. K519 is modified (N6-succinyllysine).

This sequence belongs to the aldehyde dehydrogenase family. Homodimer. The N-terminus is blocked.

It localises to the mitochondrion. It carries out the reaction 2-methyl-3-oxopropanoate + NAD(+) + CoA + H2O = propanoyl-CoA + hydrogencarbonate + NADH + H(+). The enzyme catalyses 3-oxopropanoate + NAD(+) + CoA + H2O = hydrogencarbonate + acetyl-CoA + NADH + H(+). The catalysed reaction is (R)-2-methyl-3-oxopropanoate + NAD(+) + CoA + H2O = propanoyl-CoA + hydrogencarbonate + NADH + H(+). It catalyses the reaction (S)-2-methyl-3-oxopropanoate + NAD(+) + CoA + H2O = propanoyl-CoA + hydrogencarbonate + NADH + H(+). Functionally, malonate and methylmalonate semialdehyde dehydrogenase involved in the catabolism of valine, thymine, and compounds catabolized by way of beta-alanine, including uracil and cytidine. The protein is Methylmalonate-semialdehyde/malonate-semialdehyde dehydrogenase [acylating], mitochondrial (ALDH6A1) of Bos taurus (Bovine).